We begin with the raw amino-acid sequence, 142 residues long: uncharacterized protein (142 aa).

Helical transmembrane passes span 3 to 23 (LIFIAKMLQYSFLPFSPFNLL), 30 to 50 (SVSWFITYSVIVSIWGFAVWI), and 91 to 111 (FFLLYLFLTASNLIVQLAYFS).

It localises to the membrane. This is an uncharacterized protein from Saccharomyces cerevisiae (strain ATCC 204508 / S288c) (Baker's yeast).